The sequence spans 349 residues: 4-hydroxy-2-oxovalerate aldolase 1 (349 aa).

In terms of domain architecture, Pyruvate carboxyltransferase spans 9–261; the sequence is ITVHDMTLRD…ATGVDVFRIQ (253 aa). 17 to 18 is a binding site for substrate; the sequence is RD. Residue D18 coordinates Mn(2+). The active-site Proton acceptor is the H21. Substrate is bound by residues S171 and H200. Mn(2+)-binding residues include H200 and H202. Y291 contacts substrate.

It belongs to the 4-hydroxy-2-oxovalerate aldolase family.

It carries out the reaction (S)-4-hydroxy-2-oxopentanoate = acetaldehyde + pyruvate. This is 4-hydroxy-2-oxovalerate aldolase 1 from Methylibium petroleiphilum (strain ATCC BAA-1232 / LMG 22953 / PM1).